Reading from the N-terminus, the 220-residue chain is Cell division protein SepF (220 aa).

The segment at methionine 1–histidine 120 is disordered. Positions leucine 26–valine 35 are enriched in basic and acidic residues. Over residues glutamine 39 to alanine 79 the composition is skewed to low complexity. The segment covering valine 93–alanine 102 has biased composition (basic and acidic residues).

This sequence belongs to the SepF family. In terms of assembly, homodimer. Interacts with FtsZ.

The protein resides in the cytoplasm. In terms of biological role, cell division protein that is part of the divisome complex and is recruited early to the Z-ring. Probably stimulates Z-ring formation, perhaps through the cross-linking of FtsZ protofilaments. Its function overlaps with FtsA. In Streptococcus equi subsp. equi (strain 4047), this protein is Cell division protein SepF.